Reading from the N-terminus, the 323-residue chain is Elongation factor P--(R)-beta-lysine ligase (323 aa).

76-78 (SPE) provides a ligand contact to substrate. ATP contacts are provided by residues 100-102 (RNE) and Asn109. Tyr118 contacts substrate. 242–243 (EL) is an ATP binding site. A substrate-binding site is contributed by Glu249. Gly298 contributes to the ATP binding site.

Belongs to the class-II aminoacyl-tRNA synthetase family. EpmA subfamily. In terms of assembly, homodimer.

The enzyme catalyses D-beta-lysine + L-lysyl-[protein] + ATP = N(6)-((3R)-3,6-diaminohexanoyl)-L-lysyl-[protein] + AMP + diphosphate + H(+). In terms of biological role, with EpmB is involved in the beta-lysylation step of the post-translational modification of translation elongation factor P (EF-P). Catalyzes the ATP-dependent activation of (R)-beta-lysine produced by EpmB, forming a lysyl-adenylate, from which the beta-lysyl moiety is then transferred to the epsilon-amino group of a conserved specific lysine residue in EF-P. The chain is Elongation factor P--(R)-beta-lysine ligase from Haemophilus influenzae (strain ATCC 51907 / DSM 11121 / KW20 / Rd).